The following is a 249-amino-acid chain: Diphthine synthase (249 aa).

S-adenosyl-L-methionine-binding positions include Asp-83, Leu-86, 111–112 (SI), Leu-163, and Leu-205.

The protein belongs to the diphthine synthase family. As to quaternary structure, homodimer.

The enzyme catalyses 2-[(3S)-amino-3-carboxypropyl]-L-histidyl-[translation elongation factor 2] + 3 S-adenosyl-L-methionine = diphthine-[translation elongation factor 2] + 3 S-adenosyl-L-homocysteine + 3 H(+). The protein operates within protein modification; peptidyl-diphthamide biosynthesis. Functionally, S-adenosyl-L-methionine-dependent methyltransferase that catalyzes the trimethylation of the amino group of the modified target histidine residue in translation elongation factor 2 (EF-2), to form an intermediate called diphthine. The three successive methylation reactions represent the second step of diphthamide biosynthesis. This Pyrobaculum islandicum (strain DSM 4184 / JCM 9189 / GEO3) protein is Diphthine synthase.